The primary structure comprises 596 residues: Elongation factor 4 (596 aa).

The tr-type G domain occupies 2–183 (KNIRNFSIIA…AIVDRIPAPV (182 aa)). Residues 14–19 (DHGKST) and 130–133 (NKID) each bind GTP.

The protein belongs to the TRAFAC class translation factor GTPase superfamily. Classic translation factor GTPase family. LepA subfamily.

The protein resides in the cell inner membrane. It carries out the reaction GTP + H2O = GDP + phosphate + H(+). In terms of biological role, required for accurate and efficient protein synthesis under certain stress conditions. May act as a fidelity factor of the translation reaction, by catalyzing a one-codon backward translocation of tRNAs on improperly translocated ribosomes. Back-translocation proceeds from a post-translocation (POST) complex to a pre-translocation (PRE) complex, thus giving elongation factor G a second chance to translocate the tRNAs correctly. Binds to ribosomes in a GTP-dependent manner. This chain is Elongation factor 4, found in Sulfurimonas denitrificans (strain ATCC 33889 / DSM 1251) (Thiomicrospira denitrificans (strain ATCC 33889 / DSM 1251)).